A 123-amino-acid chain; its full sequence is Large ribosomal subunit protein uL14 (123 aa).

It belongs to the universal ribosomal protein uL14 family. Part of the 50S ribosomal subunit. Forms a cluster with proteins L3 and L19. In the 70S ribosome, L14 and L19 interact and together make contacts with the 16S rRNA in bridges B5 and B8.

Binds to 23S rRNA. Forms part of two intersubunit bridges in the 70S ribosome. This Buchnera aphidicola subsp. Acyrthosiphon kondoi (Acyrthosiphon kondoi symbiotic bacterium) protein is Large ribosomal subunit protein uL14.